Here is a 193-residue protein sequence, read N- to C-terminus: Protein GrpE (193 aa).

Residues 1–26 are disordered; it reads MTKKHHKEQEEIQETIKTEAAEENVG. Basic and acidic residues predominate over residues 7–20; that stretch reads KEQEEIQETIKTEA.

The protein belongs to the GrpE family. In terms of assembly, homodimer.

Its subcellular location is the cytoplasm. Its function is as follows. Participates actively in the response to hyperosmotic and heat shock by preventing the aggregation of stress-denatured proteins, in association with DnaK and GrpE. It is the nucleotide exchange factor for DnaK and may function as a thermosensor. Unfolded proteins bind initially to DnaJ; upon interaction with the DnaJ-bound protein, DnaK hydrolyzes its bound ATP, resulting in the formation of a stable complex. GrpE releases ADP from DnaK; ATP binding to DnaK triggers the release of the substrate protein, thus completing the reaction cycle. Several rounds of ATP-dependent interactions between DnaJ, DnaK and GrpE are required for fully efficient folding. This Chlorobaculum parvum (strain DSM 263 / NCIMB 8327) (Chlorobium vibrioforme subsp. thiosulfatophilum) protein is Protein GrpE.